Here is a 295-residue protein sequence, read N- to C-terminus: Ribosomal protein L11 methyltransferase (295 aa).

S-adenosyl-L-methionine contacts are provided by Thr150, Gly171, Asp193, and Asn232.

The protein belongs to the methyltransferase superfamily. PrmA family.

Its subcellular location is the cytoplasm. It catalyses the reaction L-lysyl-[protein] + 3 S-adenosyl-L-methionine = N(6),N(6),N(6)-trimethyl-L-lysyl-[protein] + 3 S-adenosyl-L-homocysteine + 3 H(+). Methylates ribosomal protein L11. The polypeptide is Ribosomal protein L11 methyltransferase (Neisseria meningitidis serogroup A / serotype 4A (strain DSM 15465 / Z2491)).